We begin with the raw amino-acid sequence, 194 residues long: ATP-dependent Clp protease proteolytic subunit (194 aa).

The active-site Nucleophile is serine 98. Residue histidine 123 is part of the active site.

Belongs to the peptidase S14 family. In terms of assembly, fourteen ClpP subunits assemble into 2 heptameric rings which stack back to back to give a disk-like structure with a central cavity, resembling the structure of eukaryotic proteasomes.

Its subcellular location is the cytoplasm. The catalysed reaction is Hydrolysis of proteins to small peptides in the presence of ATP and magnesium. alpha-casein is the usual test substrate. In the absence of ATP, only oligopeptides shorter than five residues are hydrolyzed (such as succinyl-Leu-Tyr-|-NHMec, and Leu-Tyr-Leu-|-Tyr-Trp, in which cleavage of the -Tyr-|-Leu- and -Tyr-|-Trp bonds also occurs).. In terms of biological role, cleaves peptides in various proteins in a process that requires ATP hydrolysis. Has a chymotrypsin-like activity. Plays a major role in the degradation of misfolded proteins. In Staphylococcus saprophyticus subsp. saprophyticus (strain ATCC 15305 / DSM 20229 / NCIMB 8711 / NCTC 7292 / S-41), this protein is ATP-dependent Clp protease proteolytic subunit.